Reading from the N-terminus, the 584-residue chain is Phosphoinositide phospholipase C 7 (584 aa).

The EF-hand-like domain maps to 26 to 102; the sequence is EIKTLFDNYS…NSPLSSLEVH (77 aa). The region spanning 103–248 is the PI-PLC X-box domain; sequence QDMDAPLSHY…LKKRIMISTK (146 aa). Catalysis depends on residues His-118 and His-164. Positions 285-318 are disordered; the sequence is DRSVDKNDSNGDDDDDDDDDDDDDDGDDKIKKNA. Phosphoserine is present on Ser-287. Residues 294-311 show a composition bias toward acidic residues; that stretch reads NGDDDDDDDDDDDDDDGD. The region spanning 323 to 439 is the PI-PLC Y-box domain; that stretch reads KHLIAIEAGK…GYIKKPDLLL (117 aa). One can recognise a C2 domain in the interval 433–566; the sequence is KKPDLLLKSN…QGIRAVPLRN (134 aa).

Ca(2+) serves as cofactor. As to expression, expressed in leaves, roots, flowers and siliques.

The protein resides in the cell membrane. The enzyme catalyses a 1,2-diacyl-sn-glycero-3-phospho-(1D-myo-inositol-4,5-bisphosphate) + H2O = 1D-myo-inositol 1,4,5-trisphosphate + a 1,2-diacyl-sn-glycerol + H(+). Its function is as follows. The production of the second messenger molecules diacylglycerol (DAG) and inositol 1,4,5-trisphosphate (IP3) is mediated by activated phosphatidylinositol-specific phospholipase C enzymes. In Arabidopsis thaliana (Mouse-ear cress), this protein is Phosphoinositide phospholipase C 7 (PLC7).